Reading from the N-terminus, the 130-residue chain is Small ribosomal subunit protein uS11c (130 aa).

The protein belongs to the universal ribosomal protein uS11 family. As to quaternary structure, part of the 30S ribosomal subunit.

The protein localises to the plastid. Its subcellular location is the chloroplast. This is Small ribosomal subunit protein uS11c from Mesostigma viride (Green alga).